Consider the following 200-residue polypeptide: Large ribosomal subunit protein uL4 (200 aa).

A disordered region spans residues 43 to 71 (RAQKTRAEVSGSGKKPWRQKGTGRARSGD).

Belongs to the universal ribosomal protein uL4 family. Part of the 50S ribosomal subunit.

One of the primary rRNA binding proteins, this protein initially binds near the 5'-end of the 23S rRNA. It is important during the early stages of 50S assembly. It makes multiple contacts with different domains of the 23S rRNA in the assembled 50S subunit and ribosome. In terms of biological role, forms part of the polypeptide exit tunnel. This is Large ribosomal subunit protein uL4 from Aggregatibacter actinomycetemcomitans (Actinobacillus actinomycetemcomitans).